The chain runs to 489 residues: Putative general negative regulator of transcription C16C9.04c (489 aa).

An RING-type zinc finger spans residues 18 to 61 (CPLCMEEIDISDKNFKPCQCGYRVCRFCWHHIKEDLNGRCPACR). Positions 76–109 (AEEWKMDLHRKNERKKREKERKEVELSNRKHLAN) form a coiled coil. The region spanning 116–198 (NLAYVNGLSP…VSDGRHLRAS (83 aa)) is the RRM domain. The C3H1-type zinc finger occupies 199–226 (YGTTKYCTSYLRNQQCPNPSCMYLHEPG). Polar residues-rich tracts occupy residues 246-261 (LSTKPNVVNGATHSPS) and 466-479 (ENQPPTSLGINNGN). Disordered stretches follow at residues 246 to 268 (LSTKPNVVNGATHSPSPSLPFKT) and 458 to 489 (VPEQEKSAENQPPTSLGINNGNPVMPPPGFQS).

It localises to the nucleus. In terms of biological role, may negatively regulate the basal and activated transcription of many genes. In Schizosaccharomyces pombe (strain 972 / ATCC 24843) (Fission yeast), this protein is Putative general negative regulator of transcription C16C9.04c.